The following is a 139-amino-acid chain: GSK3B-interacting protein (139 aa).

The required for PRKAR2A interaction; contributes to a protective effect against H(2)O(2)-induced apoptosis stretch occupies residues 41–45; that stretch reads VNDVL. Positions 115-139 are interaction with GSK3B and acts as a GSK3B inhibitor; sequence SPAYREAFGNALLQRLEALKREGQS.

This sequence belongs to the GSKIP family. In terms of assembly, forms a complex composed of PRKAR2A or PRKAR2B, GSK3B and GSKIP through GSKIP interaction; facilitates PKA-induced phosphorylation of GSK3B leading to GSK3B inactivation; recruits DNM1L through GSK3B for PKA-mediated phosphorylation of DNM1L; promotes beta-catenin degradation through GSK3B-induced phosphorylation of beta-catenin; stabilizes beta-catenin and enhances Wnt-induced signaling through PKA-induced phosphorylation of beta-catenin. Interacts with GSK3B; induces GSK3B-mediated phosphorylation of GSKIP and inhibits GSK3B kinase activity. Phosphorylated by GSK3B.

Its subcellular location is the cytoplasm. It localises to the nucleus. Functionally, A-kinase anchoring protein for GSK3B and PKA that regulates or facilitates their kinase activity towards their targets. The ternary complex enhances Wnt-induced signaling by facilitating the GSK3B- and PKA-induced phosphorylation of beta-catenin leading to beta-catenin degradation and stabilization respectively. Upon cAMP activation, the ternary complex contributes to neuroprotection against oxidative stress-induced apoptosis by facilitating the PKA-induced phosphorylation of DML1 and PKA-induced inactivation of GSK3B. During neurite outgrowth promotes neuron proliferation; while increases beta-catenin-induced transcriptional activity through GSK3B kinase activity inhibition, reduces N-cadherin level to promote cell cycle progression. May play a role in cleft palate formation and is required for postnatal life through modulation of the activity of GSK3B during development. This Bos taurus (Bovine) protein is GSK3B-interacting protein.